Consider the following 441-residue polypeptide: Trigger factor (441 aa).

The PPIase FKBP-type domain maps to 175–257; that stretch reads GDFISLSLHV…VNAVIEVVAP (83 aa).

This sequence belongs to the FKBP-type PPIase family. Tig subfamily.

Its subcellular location is the cytoplasm. It carries out the reaction [protein]-peptidylproline (omega=180) = [protein]-peptidylproline (omega=0). Involved in protein export. Acts as a chaperone by maintaining the newly synthesized protein in an open conformation. Functions as a peptidyl-prolyl cis-trans isomerase. This chain is Trigger factor, found in Chlamydia abortus (strain DSM 27085 / S26/3) (Chlamydophila abortus).